A 105-amino-acid chain; its full sequence is Cell division protein FtsB (105 aa).

At Met-1–Leu-3 the chain is on the cytoplasmic side. A helical transmembrane segment spans residues Phe-4 to Phe-21. The Periplasmic segment spans residues Gly-22–Asp-105. A coiled-coil region spans residues Glu-28–Asp-74.

The protein belongs to the FtsB family. Part of a complex composed of FtsB, FtsL and FtsQ.

Its subcellular location is the cell inner membrane. In terms of biological role, essential cell division protein. May link together the upstream cell division proteins, which are predominantly cytoplasmic, with the downstream cell division proteins, which are predominantly periplasmic. This is Cell division protein FtsB from Tolumonas auensis (strain DSM 9187 / NBRC 110442 / TA 4).